The primary structure comprises 418 residues: NADH-quinone oxidoreductase subunit D (418 aa).

It belongs to the complex I 49 kDa subunit family. As to quaternary structure, NDH-1 is composed of 14 different subunits. Subunits NuoB, C, D, E, F, and G constitute the peripheral sector of the complex.

The protein localises to the cell inner membrane. It carries out the reaction a quinone + NADH + 5 H(+)(in) = a quinol + NAD(+) + 4 H(+)(out). Functionally, NDH-1 shuttles electrons from NADH, via FMN and iron-sulfur (Fe-S) centers, to quinones in the respiratory chain. The immediate electron acceptor for the enzyme in this species is believed to be ubiquinone. Couples the redox reaction to proton translocation (for every two electrons transferred, four hydrogen ions are translocated across the cytoplasmic membrane), and thus conserves the redox energy in a proton gradient. The polypeptide is NADH-quinone oxidoreductase subunit D (Bordetella pertussis (strain Tohama I / ATCC BAA-589 / NCTC 13251)).